Consider the following 881-residue polypeptide: Formin-like protein 10 (881 aa).

An N-terminal signal peptide occupies residues 1 to 24 (MAMKRVVFLLLLVAASALVKSSRG). Positions 194-223 (LTPSNSLNMEPPSPYYPSKSAHKHQGVAPP) are disordered. Residues 236–256 (VVLIAVLPTAALSFLAAFLCF) form a helical membrane-spanning segment. Residues 333 to 346 (TLVTGGTQENNATS) are compositionally biased toward polar residues. Disordered regions lie at residues 333 to 427 (TLVT…EVNA), 683 to 703 (ENGRSPPFPSTSDDNSNESLQ), and 837 to 881 (ASQK…DSND). A compositionally biased stretch (pro residues) spans 351–390 (LMPPPPPPPPPPPPPPPPPPPRPPPPPPPIKKGAPPPAPP). The segment covering 400–424 (LSPTESSRSEESSASELASESSETE) has biased composition (low complexity). Residues 422-854 (ETEVNAPRAK…KSQANGNSNN (433 aa)) enclose the FH2 domain. Residues 692 to 701 (STSDDNSNES) show a composition bias toward polar residues. Over residues 846–865 (SQANGNSNNPSSQSNPQEQQ) the composition is skewed to low complexity. Over residues 870-881 (LDHHFDSSDSND) the composition is skewed to basic and acidic residues.

This sequence belongs to the formin-like family. Class-I subfamily.

It is found in the membrane. The protein is Formin-like protein 10 (FH10) of Oryza sativa subsp. japonica (Rice).